Consider the following 424-residue polypeptide: Dihydrolipoyllysine-residue succinyltransferase component of 2-oxoglutarate dehydrogenase complex (424 aa).

A Lipoyl-binding domain is found at 1-76 (MPEVKVPELA…EVGQAIAVVG (76 aa)). At Lys42 the chain carries N6-lipoyllysine. Disordered stretches follow at residues 76-138 (GEGS…KYAR) and 155-204 (VRKE…RKKT). Residues 91 to 105 (EAPKQETETSTDDKS) show a composition bias toward basic and acidic residues. Polar residues predominate over residues 122 to 131 (DNNQRVNATP). The region spanning 128–164 (NATPSARKYAREKGIDLSEIAAASNDVVRKEHVDQSQ) is the Peripheral subunit-binding (PSBD) domain. The segment covering 162-176 (QSQTQTSTQQQAQPA) has biased composition (low complexity). Catalysis depends on residues His395 and Asp399.

The protein belongs to the 2-oxoacid dehydrogenase family. In terms of assembly, forms a 24-polypeptide structural core with octahedral symmetry. Part of the 2-oxoglutarate dehydrogenase (OGDH) complex composed of E1 (2-oxoglutarate dehydrogenase), E2 (dihydrolipoamide succinyltransferase) and E3 (dihydrolipoamide dehydrogenase); the complex contains multiple copies of the three enzymatic components (E1, E2 and E3). (R)-lipoate is required as a cofactor.

It catalyses the reaction N(6)-[(R)-dihydrolipoyl]-L-lysyl-[protein] + succinyl-CoA = N(6)-[(R)-S(8)-succinyldihydrolipoyl]-L-lysyl-[protein] + CoA. Its pathway is amino-acid degradation; L-lysine degradation via saccharopine pathway; glutaryl-CoA from L-lysine: step 6/6. In terms of biological role, E2 component of the 2-oxoglutarate dehydrogenase (OGDH) complex which catalyzes the second step in the conversion of 2-oxoglutarate to succinyl-CoA and CO(2). This Staphylococcus saprophyticus subsp. saprophyticus (strain ATCC 15305 / DSM 20229 / NCIMB 8711 / NCTC 7292 / S-41) protein is Dihydrolipoyllysine-residue succinyltransferase component of 2-oxoglutarate dehydrogenase complex (odhB).